The following is a 555-amino-acid chain: Hydroxylamine reductase (555 aa).

Positions 5, 8, 17, and 23 each coordinate [4Fe-4S] cluster. Hybrid [4Fe-2O-2S] cluster contacts are provided by His-248, Glu-272, Cys-316, Cys-408, Cys-436, Cys-461, Glu-496, and Lys-498. The residue at position 408 (Cys-408) is a Cysteine persulfide.

It belongs to the HCP family. [4Fe-4S] cluster serves as cofactor. Hybrid [4Fe-2O-2S] cluster is required as a cofactor.

The protein localises to the cytoplasm. It carries out the reaction A + NH4(+) + H2O = hydroxylamine + AH2 + H(+). In terms of biological role, catalyzes the reduction of hydroxylamine to form NH(3) and H(2)O. This is Hydroxylamine reductase from Halothermothrix orenii (strain H 168 / OCM 544 / DSM 9562).